A 141-amino-acid polypeptide reads, in one-letter code: MVARTIATFAGSTALTIKPFLVNLPVVICLAAYLVSQVFCLAGFCPDYLAELHLCTFFTFFTSFLLVPLAIFTLRKDGNFLRKRAVFTSYSCVYPPFRLGNPTCFYSYHWFLIHIPESLWLVNNGFGLRATCRLSSRRSQR.

Transmembrane regions (helical) follow at residues 20-42 (FLVN…FCLA) and 52-74 (LHLC…IFTL).

The protein localises to the cell membrane. This is an uncharacterized protein from Archaeoglobus fulgidus (strain ATCC 49558 / DSM 4304 / JCM 9628 / NBRC 100126 / VC-16).